Reading from the N-terminus, the 277-residue chain is 3-methyl-2-oxobutanoate hydroxymethyltransferase (277 aa).

The Mg(2+) site is built by aspartate 58 and aspartate 97. Residues aspartate 58–serine 59, aspartate 97, and lysine 127 each bind 3-methyl-2-oxobutanoate. Residue glutamate 129 coordinates Mg(2+). Glutamate 195 serves as the catalytic Proton acceptor.

The protein belongs to the PanB family. Homodecamer; pentamer of dimers. It depends on Mg(2+) as a cofactor.

Its subcellular location is the cytoplasm. The enzyme catalyses 3-methyl-2-oxobutanoate + (6R)-5,10-methylene-5,6,7,8-tetrahydrofolate + H2O = 2-dehydropantoate + (6S)-5,6,7,8-tetrahydrofolate. It functions in the pathway cofactor biosynthesis; (R)-pantothenate biosynthesis; (R)-pantoate from 3-methyl-2-oxobutanoate: step 1/2. Its function is as follows. Catalyzes the reversible reaction in which hydroxymethyl group from 5,10-methylenetetrahydrofolate is transferred onto alpha-ketoisovalerate to form ketopantoate. This Leifsonia xyli subsp. xyli (strain CTCB07) protein is 3-methyl-2-oxobutanoate hydroxymethyltransferase.